We begin with the raw amino-acid sequence, 213 residues long: Uridine kinase (213 aa).

Residue 14 to 21 (GASASGKS) participates in ATP binding.

Belongs to the uridine kinase family.

It is found in the cytoplasm. The enzyme catalyses uridine + ATP = UMP + ADP + H(+). It carries out the reaction cytidine + ATP = CMP + ADP + H(+). It participates in pyrimidine metabolism; CTP biosynthesis via salvage pathway; CTP from cytidine: step 1/3. Its pathway is pyrimidine metabolism; UMP biosynthesis via salvage pathway; UMP from uridine: step 1/1. This is Uridine kinase from Vibrio parahaemolyticus serotype O3:K6 (strain RIMD 2210633).